The following is an 80-amino-acid chain: OMEGA-myrmeciitoxin(02)-Mg1a (80 aa).

Residues M1 to A30 form the signal peptide. Residues Y35–E75 form the EGF-like domain. Disulfide bonds link C39–C52, C47–C63, and C65–C74.

Belongs to the EGF domain peptide family. As to expression, expressed by the venom gland.

The protein localises to the secreted. Its function is as follows. Ant peptide with probable defensive activity which acts as a potent agonist of the mammalian epidermal growth factor receptor (EGFR) (EC(50)=6.3 nM). Mimics, both structurally and functionally, vertebrate epidermal growth factor (EGF) peptide hormones. In vivo, intraplantar injection in mice causes long-lasting (several days) hypersensitivity of the injected paw to both mechanical and thermal stimuli. Its long-lasting effect is unusual for venom toxins whose effects are usually immediate. One possible explanation is that it would reduce the duration of a nest attack, discourage future attacks, or enhance the actions of subsequent exposure to other pain-inducing venom peptides. This chain is OMEGA-myrmeciitoxin(02)-Mg1a, found in Myrmecia gulosa (Red bulldog ant).